The sequence spans 219 residues: Probable GTP-binding protein EngB (219 aa).

Positions 33–217 constitute an EngB-type G domain; sequence GPLEIAFAGR…RAAICETVGH (185 aa). Residues 41-48, 68-72, 95-98, 162-165, and 196-198 each bind GTP; these read GRSNVGKS, GRTQE, DMPG, TKTD, and TSS. Ser-48 and Thr-70 together coordinate Mg(2+).

It belongs to the TRAFAC class TrmE-Era-EngA-EngB-Septin-like GTPase superfamily. EngB GTPase family. It depends on Mg(2+) as a cofactor.

In terms of biological role, necessary for normal cell division and for the maintenance of normal septation. This is Probable GTP-binding protein EngB from Allorhizobium ampelinum (strain ATCC BAA-846 / DSM 112012 / S4) (Agrobacterium vitis (strain S4)).